The following is a 160-amino-acid chain: Large ribosomal subunit protein uL30m (160 aa).

A mitochondrion-targeting transit peptide spans 1–34; it reads MAGVLRSAFPRPPCRLQTVKKGAESLIGTEWIRH. Positions 44–64 are disordered; the sequence is KVFQPKPEDHEKYGGDPQNPH.

It belongs to the universal ribosomal protein uL30 family. Component of the mitochondrial ribosome large subunit (39S) which comprises a 16S rRNA and about 50 distinct proteins.

The protein localises to the mitochondrion. The chain is Large ribosomal subunit protein uL30m (Mrpl30) from Mus musculus (Mouse).